Consider the following 223-residue polypeptide: UPF0441 protein YgiB (223 aa).

Residues 178–195 show a composition bias toward low complexity; the sequence is TVPKTAMAPKPATTTTVT. The segment at 178–223 is disordered; that stretch reads TVPKTAMAPKPATTTTVTRGGFGESIAKQSTMQRSATGTSSRSMGG. Residues 204-223 show a composition bias toward polar residues; it reads AKQSTMQRSATGTSSRSMGG.

Belongs to the UPF0441 family.

In Shigella boydii serotype 4 (strain Sb227), this protein is UPF0441 protein YgiB.